We begin with the raw amino-acid sequence, 232 residues long: DNA repair protein RecO (232 aa).

It belongs to the RecO family.

In terms of biological role, involved in DNA repair and RecF pathway recombination. This chain is DNA repair protein RecO, found in Francisella tularensis subsp. novicida (strain U112).